The sequence spans 432 residues: Probable D-serine dehydratase (432 aa).

The residue at position 112 (lysine 112) is an N6-(pyridoxal phosphate)lysine.

This sequence belongs to the serine/threonine dehydratase family. DsdA subfamily. Requires pyridoxal 5'-phosphate as cofactor.

The enzyme catalyses D-serine = pyruvate + NH4(+). This Pediococcus pentosaceus (strain ATCC 25745 / CCUG 21536 / LMG 10740 / 183-1w) protein is Probable D-serine dehydratase.